Consider the following 240-residue polypeptide: Phosphatidylserine decarboxylase proenzyme (240 aa).

Serine 205 acts as the Schiff-base intermediate with substrate; via pyruvic acid in catalysis. Pyruvic acid (Ser); by autocatalysis is present on serine 205.

This sequence belongs to the phosphatidylserine decarboxylase family. PSD-A subfamily. As to quaternary structure, heterodimer of a large membrane-associated beta subunit and a small pyruvoyl-containing alpha subunit. The cofactor is pyruvate. In terms of processing, is synthesized initially as an inactive proenzyme. Formation of the active enzyme involves a self-maturation process in which the active site pyruvoyl group is generated from an internal serine residue via an autocatalytic post-translational modification. Two non-identical subunits are generated from the proenzyme in this reaction, and the pyruvate is formed at the N-terminus of the alpha chain, which is derived from the carboxyl end of the proenzyme. The post-translation cleavage follows an unusual pathway, termed non-hydrolytic serinolysis, in which the side chain hydroxyl group of the serine supplies its oxygen atom to form the C-terminus of the beta chain, while the remainder of the serine residue undergoes an oxidative deamination to produce ammonia and the pyruvoyl prosthetic group on the alpha chain.

It localises to the cell membrane. It catalyses the reaction a 1,2-diacyl-sn-glycero-3-phospho-L-serine + H(+) = a 1,2-diacyl-sn-glycero-3-phosphoethanolamine + CO2. It functions in the pathway phospholipid metabolism; phosphatidylethanolamine biosynthesis; phosphatidylethanolamine from CDP-diacylglycerol: step 2/2. Functionally, catalyzes the formation of phosphatidylethanolamine (PtdEtn) from phosphatidylserine (PtdSer). This Rhodopirellula baltica (strain DSM 10527 / NCIMB 13988 / SH1) protein is Phosphatidylserine decarboxylase proenzyme.